Consider the following 136-residue polypeptide: Large ribosomal subunit protein uL16 (136 aa).

This sequence belongs to the universal ribosomal protein uL16 family. Part of the 50S ribosomal subunit.

Binds 23S rRNA and is also seen to make contacts with the A and possibly P site tRNAs. The protein is Large ribosomal subunit protein uL16 of Rickettsia felis (strain ATCC VR-1525 / URRWXCal2) (Rickettsia azadi).